The chain runs to 752 residues: Polyribonucleotide nucleotidyltransferase (752 aa).

Residues D529 and D535 each contribute to the Mg(2+) site. In terms of domain architecture, KH spans 595–654 (PRVTTIKVPVDKIGEVIGPKGKVINAITEETGAQISIEDDGTVFVGATDGPSAQAAIDKI). Residues 666–735 (GERFLGTVVK…KRGKISLILV (70 aa)) form the S1 motif domain.

It belongs to the polyribonucleotide nucleotidyltransferase family. It depends on Mg(2+) as a cofactor.

It localises to the cytoplasm. It carries out the reaction RNA(n+1) + phosphate = RNA(n) + a ribonucleoside 5'-diphosphate. In terms of biological role, involved in mRNA degradation. Catalyzes the phosphorolysis of single-stranded polyribonucleotides processively in the 3'- to 5'-direction. The sequence is that of Polyribonucleotide nucleotidyltransferase from Mycobacterium tuberculosis (strain ATCC 25177 / H37Ra).